The sequence spans 186 residues: Casparian strip membrane protein 1 (186 aa).

Topologically, residues 1-26 are cytoplasmic; the sequence is MKGGSIELGEVSKNASTNKGVKRGLS. The chain crosses the membrane as a helical span at residues 27 to 47; it reads IMDFILRIIAGVATLASAVAM. At 48 to 72 the chain is on the extracellular side; the sequence is GTTDERLPFATSFVQFRAEYDDLPS. A helical membrane pass occupies residues 73 to 93; sequence FVFFVLANSIVCGYLALSLIL. Residues 94–107 lie on the Cytoplasmic side of the membrane; that stretch reads SILHIVRSTAVKSR. Residues 108 to 128 form a helical membrane-spanning segment; it reads ILLIVLDMVMMGLLAAAASAA. The Extracellular segment spans residues 129 to 157; that stretch reads ASIVYIAHYGNTQANWFPICQQYNSFCER. Residues 158–178 traverse the membrane as a helical segment; sequence ISGSLIGSYIAVALFIIIILL. The Cytoplasmic portion of the chain corresponds to 179-186; that stretch reads SQSAISRN.

Belongs to the Casparian strip membrane proteins (CASP) family. Homodimer and heterodimers.

Its subcellular location is the cell membrane. In terms of biological role, regulates membrane-cell wall junctions and localized cell wall deposition. Required for establishment of the Casparian strip membrane domain (CSD) and the subsequent formation of Casparian strips, a cell wall modification of the root endodermis that determines an apoplastic barrier between the intraorganismal apoplasm and the extraorganismal apoplasm and prevents lateral diffusion. This Medicago truncatula (Barrel medic) protein is Casparian strip membrane protein 1.